Here is a 352-residue protein sequence, read N- to C-terminus: Ketol-acid reductoisomerase (NAD(+)) (352 aa).

The KARI N-terminal Rossmann domain maps to 11 to 199 (ENVVTSEEFT…AIGSGYLFPT (189 aa)). Residues 38–41 (YGVQ) and 100–103 (DAGQ) contribute to the NAD(+) site. H124 is an active-site residue. An NAD(+)-binding site is contributed by G153. The KARI C-terminal knotted domain maps to 200–347 (TFEKEVFSDL…AAVRALRPEN (148 aa)). Mg(2+) is bound by residues D208, E212, E244, and E248. Residue S270 participates in substrate binding.

The protein belongs to the ketol-acid reductoisomerase family. It depends on Mg(2+) as a cofactor.

It carries out the reaction (2R)-2,3-dihydroxy-3-methylbutanoate + NAD(+) = (2S)-2-acetolactate + NADH + H(+). It participates in amino-acid biosynthesis; L-isoleucine biosynthesis; L-isoleucine from 2-oxobutanoate: step 2/4. Its pathway is amino-acid biosynthesis; L-valine biosynthesis; L-valine from pyruvate: step 2/4. Functionally, involved in the biosynthesis of branched-chain amino acids (BCAA). Catalyzes an alkyl-migration followed by a ketol-acid reduction of (S)-2-acetolactate (S2AL) to yield (R)-2,3-dihydroxy-isovalerate. In the isomerase reaction, S2AL is rearranged via a Mg-dependent methyl migration to produce 3-hydroxy-3-methyl-2-ketobutyrate (HMKB). In the reductase reaction, this 2-ketoacid undergoes a metal-dependent reduction by NADH to yield (R)-2,3-dihydroxy-isovalerate. This is Ketol-acid reductoisomerase (NAD(+)) from Desulfosudis oleivorans (strain DSM 6200 / JCM 39069 / Hxd3) (Desulfococcus oleovorans).